The chain runs to 354 residues: UDP-3-O-acylglucosamine N-acyltransferase (354 aa).

Catalysis depends on His245, which acts as the Proton acceptor.

This sequence belongs to the transferase hexapeptide repeat family. LpxD subfamily. Homotrimer.

The catalysed reaction is a UDP-3-O-[(3R)-3-hydroxyacyl]-alpha-D-glucosamine + a (3R)-hydroxyacyl-[ACP] = a UDP-2-N,3-O-bis[(3R)-3-hydroxyacyl]-alpha-D-glucosamine + holo-[ACP] + H(+). It functions in the pathway bacterial outer membrane biogenesis; LPS lipid A biosynthesis. Catalyzes the N-acylation of UDP-3-O-acylglucosamine using 3-hydroxyacyl-ACP as the acyl donor. Is involved in the biosynthesis of lipid A, a phosphorylated glycolipid that anchors the lipopolysaccharide to the outer membrane of the cell. The sequence is that of UDP-3-O-acylglucosamine N-acyltransferase from Anaeromyxobacter dehalogenans (strain 2CP-C).